A 709-amino-acid chain; its full sequence is Phosphomethylpyrimidine synthase (709 aa).

Over residues 1–13 (MNIRSNPDTTLPA) the composition is skewed to polar residues. Disordered regions lie at residues 1 to 21 (MNIR…PLPS) and 125 to 168 (DAPA…GREQ). Substrate contacts are provided by residues Asn-274, Met-303, Tyr-332, His-368, 388 to 390 (SRG), 429 to 432 (DGLR), and Glu-468. His-472 is a binding site for Zn(2+). Tyr-495 contacts substrate. Residue His-536 coordinates Zn(2+). 3 residues coordinate [4Fe-4S] cluster: Cys-616, Cys-619, and Cys-624.

The protein belongs to the ThiC family. Homodimer. It depends on [4Fe-4S] cluster as a cofactor.

It carries out the reaction 5-amino-1-(5-phospho-beta-D-ribosyl)imidazole + S-adenosyl-L-methionine = 4-amino-2-methyl-5-(phosphooxymethyl)pyrimidine + CO + 5'-deoxyadenosine + formate + L-methionine + 3 H(+). The protein operates within cofactor biosynthesis; thiamine diphosphate biosynthesis. Catalyzes the synthesis of the hydroxymethylpyrimidine phosphate (HMP-P) moiety of thiamine from aminoimidazole ribotide (AIR) in a radical S-adenosyl-L-methionine (SAM)-dependent reaction. The protein is Phosphomethylpyrimidine synthase of Rhodopseudomonas palustris (strain BisB18).